A 333-amino-acid polypeptide reads, in one-letter code: DNA repair and recombination protein RadA (333 aa).

Residue 127–134 (GEFGSGKT) coordinates ATP.

This sequence belongs to the eukaryotic RecA-like protein family.

In terms of biological role, involved in DNA repair and in homologous recombination. Binds and assemble on single-stranded DNA to form a nucleoprotein filament. Hydrolyzes ATP in a ssDNA-dependent manner and promotes DNA strand exchange between homologous DNA molecules. The polypeptide is DNA repair and recombination protein RadA (Pyrobaculum aerophilum (strain ATCC 51768 / DSM 7523 / JCM 9630 / CIP 104966 / NBRC 100827 / IM2)).